The following is a 635-amino-acid chain: Threonine--tRNA ligase (635 aa).

A TGS domain is found at 1–61 (MIKITLKDGK…HKDSSLEILT (61 aa)). The tract at residues 242 to 532 (DHRKLGKELD…LIEQYAGAFP (291 aa)) is catalytic. Zn(2+) is bound by residues Cys-333, His-384, and His-509.

This sequence belongs to the class-II aminoacyl-tRNA synthetase family. In terms of assembly, homodimer. The cofactor is Zn(2+).

The protein resides in the cytoplasm. The catalysed reaction is tRNA(Thr) + L-threonine + ATP = L-threonyl-tRNA(Thr) + AMP + diphosphate + H(+). Catalyzes the attachment of threonine to tRNA(Thr) in a two-step reaction: L-threonine is first activated by ATP to form Thr-AMP and then transferred to the acceptor end of tRNA(Thr). Also edits incorrectly charged L-seryl-tRNA(Thr). The sequence is that of Threonine--tRNA ligase from Clostridium botulinum (strain Loch Maree / Type A3).